We begin with the raw amino-acid sequence, 583 residues long: Isocitrate dehydrogenase kinase/phosphatase (583 aa).

ATP-binding positions include 315–321 (APGIRGM) and Lys336. Residue Asp371 is part of the active site.

It belongs to the AceK family.

It is found in the cytoplasm. It catalyses the reaction L-seryl-[isocitrate dehydrogenase] + ATP = O-phospho-L-seryl-[isocitrate dehydrogenase] + ADP + H(+). Bifunctional enzyme which can phosphorylate or dephosphorylate isocitrate dehydrogenase (IDH) on a specific serine residue. This is a regulatory mechanism which enables bacteria to bypass the Krebs cycle via the glyoxylate shunt in response to the source of carbon. When bacteria are grown on glucose, IDH is fully active and unphosphorylated, but when grown on acetate or ethanol, the activity of IDH declines drastically concomitant with its phosphorylation. The sequence is that of Isocitrate dehydrogenase kinase/phosphatase from Salmonella heidelberg (strain SL476).